Here is a 355-residue protein sequence, read N- to C-terminus: Erythronate-4-phosphate dehydrogenase (355 aa).

Residues Ser-45 and Thr-66 each contribute to the substrate site. Asp-146 provides a ligand contact to NAD(+). The active site involves Arg-206. Asp-229 serves as a coordination point for NAD(+). Residue Glu-234 is part of the active site. The active-site Proton donor is the His-251. Residue Gly-254 coordinates NAD(+). Residue Tyr-255 participates in substrate binding.

Belongs to the D-isomer specific 2-hydroxyacid dehydrogenase family. PdxB subfamily. In terms of assembly, homodimer.

It is found in the cytoplasm. The catalysed reaction is 4-phospho-D-erythronate + NAD(+) = (R)-3-hydroxy-2-oxo-4-phosphooxybutanoate + NADH + H(+). It participates in cofactor biosynthesis; pyridoxine 5'-phosphate biosynthesis; pyridoxine 5'-phosphate from D-erythrose 4-phosphate: step 2/5. Catalyzes the oxidation of erythronate-4-phosphate to 3-hydroxy-2-oxo-4-phosphonooxybutanoate. The sequence is that of Erythronate-4-phosphate dehydrogenase from Acinetobacter baumannii (strain SDF).